The chain runs to 448 residues: MQLREDLTPKQIVEELDKYIVGQKEAKKAVAIALRNRWRRHKLPEDLRDEVIPKNILMIGPTGVGKTEIARRLASLVGAPFIKVEATKFTEVGYVGRDVESIIRELAEASFKMVKAEKMEKVREKAKEIAEEKILDYLVPMRVKRYGTLETFEEETSPAREKFRQMLRNGELDERTVEIDVEEKGVSVVGGVIAPGLEDIENQLKDLFSSLAPTKRKRRKMTVREAMRVLEQQEAEKLIDMDEVASEAVYRAENFGIVFIDEIDKVAGKSTGSSPDVSREGVQRDLLPIVEGTTVSTKYGPVKTDHILFIAAGAFHLSKPSDLIPELQGRFPIRVELQPLTKDDFVKILTQPKNALIKQYKALMATEGVDIEFTDDAIEAIAEIAEQVNEKTENIGARRLHTILERIMEDYSFEAPDLKGQHIIIDEKVIRSKLGDIIQSEDLTRYIL.

Residues V21, G63–E68, D261, E326, and R398 contribute to the ATP site.

It belongs to the ClpX chaperone family. HslU subfamily. As to quaternary structure, a double ring-shaped homohexamer of HslV is capped on each side by a ring-shaped HslU homohexamer. The assembly of the HslU/HslV complex is dependent on binding of ATP.

It localises to the cytoplasm. In terms of biological role, ATPase subunit of a proteasome-like degradation complex; this subunit has chaperone activity. The binding of ATP and its subsequent hydrolysis by HslU are essential for unfolding of protein substrates subsequently hydrolyzed by HslV. HslU recognizes the N-terminal part of its protein substrates and unfolds these before they are guided to HslV for hydrolysis. The protein is ATP-dependent protease ATPase subunit HslU of Persephonella marina (strain DSM 14350 / EX-H1).